We begin with the raw amino-acid sequence, 647 residues long: MSEPLIQLKGIERRYQSGEQEVTVLHPLDLTIEAGEMIAIVGASGSGKSTLMNLLGCLDRPSSGQYLFRGQDTATLDALSLARLRCHHFGFIFQRYHLLPHLNAAANVEIPAVYAGTSRAERQARSQALLTRLGLSDRSHHTPSQLSGGQQQRVSIARALANGGEVILADEPTGALDSQSGKEVMAILKELHAQGHTIILVTHDMEVASHADRIITLKDGRVQEDSGRKPAAVPVTPTAAPAGKEGVGHDWDRYREAARMALHAMLAHRMRTFLTMLGIIIGIAAVVSVVALGQGARAKVIDQINAMGTNTIDIFPGKDWGDEKAASIQTLNKRDLDALLGQPYLEGASPQIAAPGQLRYRNKTSSGSIVGVGNDFFRVKGMKLTNGRLFDERDIQNRAAVAVVDGKTIESLLGKQDPVGQVVLVGTLPVRIIGVVEEETGFGRSSQSVNVWLPYSAVMSRLISQNHFSQLTIRVKDGVQPALAEQAAIELLTQRHGVKDFFTFSSDSIIKSVEKTTATMTLLVSAIAVISLIVGGVGVMNIMLVSVVERTREIGIRIAVGARQSDILQQFLIEAVMVSLLGGMLGVGVSLFIGLLFSLFVESIQMHFSLFSILMAFGCSSLIGILFGYLPARNAARLDPVEALARE.

The region spanning 6 to 244 is the ABC transporter domain; the sequence is IQLKGIERRY…VTPTAAPAGK (239 aa). 42–49 is an ATP binding site; the sequence is GASGSGKS. Positions 223–247 are disordered; the sequence is QEDSGRKPAAVPVTPTAAPAGKEGV. The segment covering 230-242 has biased composition (low complexity); sequence PAAVPVTPTAAPA. 4 helical membrane passes run 273-293, 527-547, 581-601, and 610-630; these read FLTM…VALG, IAVI…LVSV, LGGM…SLFV, and LFSI…FGYL.

It belongs to the ABC transporter superfamily. Macrolide exporter (TC 3.A.1.122) family. As to quaternary structure, homodimer. Part of the tripartite efflux system MacAB-TolC, which is composed of an inner membrane transporter, MacB, a periplasmic membrane fusion protein, MacA, and an outer membrane component, TolC. The complex forms a large protein conduit and can translocate molecules across both the inner and outer membranes. Interacts with MacA.

It localises to the cell inner membrane. Part of the tripartite efflux system MacAB-TolC. MacB is a non-canonical ABC transporter that contains transmembrane domains (TMD), which form a pore in the inner membrane, and an ATP-binding domain (NBD), which is responsible for energy generation. Confers resistance against macrolides. This Aeromonas hydrophila subsp. hydrophila (strain ATCC 7966 / DSM 30187 / BCRC 13018 / CCUG 14551 / JCM 1027 / KCTC 2358 / NCIMB 9240 / NCTC 8049) protein is Macrolide export ATP-binding/permease protein MacB 2.